The chain runs to 109 residues: Nascent polypeptide-associated complex protein (109 aa).

The 67-residue stretch at 3–69 (PMNPKQLKKL…TEEERVVLKI (67 aa)) folds into the NAC-A/B domain.

The protein belongs to the NAC-alpha family. Homodimer. Interacts with the ribosome. Binds ribosomal RNA.

In terms of biological role, contacts the emerging nascent chain on the ribosome. The protein is Nascent polypeptide-associated complex protein of Pyrococcus abyssi (strain GE5 / Orsay).